A 200-amino-acid polypeptide reads, in one-letter code: Small ribosomal subunit protein uS4 (200 aa).

One can recognise an S4 RNA-binding domain in the interval 92–155 (SRLDAVVYSL…QKLNVIVESV (64 aa)).

It belongs to the universal ribosomal protein uS4 family. In terms of assembly, part of the 30S ribosomal subunit. Contacts protein S5. The interaction surface between S4 and S5 is involved in control of translational fidelity.

Its function is as follows. One of the primary rRNA binding proteins, it binds directly to 16S rRNA where it nucleates assembly of the body of the 30S subunit. In terms of biological role, with S5 and S12 plays an important role in translational accuracy. The protein is Small ribosomal subunit protein uS4 of Staphylococcus aureus (strain MRSA252).